A 398-amino-acid polypeptide reads, in one-letter code: Selection and upkeep of intraepithelial T-cells protein 8 (398 aa).

An N-terminal signal peptide occupies residues 1–25 (MMKPEFSHFFGFCVYFLFLQVMASS). The Ig-like V-type domain maps to 26 to 141 (EKLRVTTPTR…DVAIMNLNVT (116 aa)). The Extracellular portion of the chain corresponds to 26-244 (EKLRVTTPTR…ANELFNQDYL (219 aa)). C49 and C123 are joined by a disulfide. 2 N-linked (GlcNAc...) asparagine glycosylation sites follow: N92 and N139. The region spanning 142-233 (AVGLETEIHV…TGEEKQTSII (92 aa)) is the Ig-like C1-type domain. A disulfide bond links C163 and C217. The helical transmembrane segment at 245 to 265 (WVGIFPFSVLSLILFGVLPFI) threads the bilayer. Over 266–288 (NSFFRSQGCASGCLSKCLPVVTS) the chain is Cytoplasmic. The helical transmembrane segment at 289-309 (WPVQIVHFLVCSGVLFAVYLP) threads the bilayer. The Extracellular portion of the chain corresponds to 310 to 331 (HRYRVSLSDPQFPLYNNWITEL). A helical membrane pass occupies residues 332–352 (LIVILFLTICFVLPITVLLLI). The Cytoplasmic segment spans residues 353–398 (KLSPTCLAKWEKNKDDIMDSQLGLGKAREASTLYEEQSRKSWEQEK).

It belongs to the SKINT family. Expressed in skin, thymus, testis and, to a lower extent, bladder, brain, heart, kidney, mammary gland, small intestine and uterus.

The protein localises to the membrane. May act by engaging a cell surface molecule on immature T-cells in the embryonic thymus. The polypeptide is Selection and upkeep of intraepithelial T-cells protein 8 (Skint8) (Mus musculus (Mouse)).